A 287-amino-acid polypeptide reads, in one-letter code: Probable ribosomal RNA small subunit methyltransferase A (287 aa).

Residues His-29, Leu-31, Gly-56, Glu-77, Asp-102, and Asn-117 each contribute to the S-adenosyl-L-methionine site.

The protein belongs to the class I-like SAM-binding methyltransferase superfamily. rRNA adenine N(6)-methyltransferase family. RsmA subfamily.

The protein localises to the cytoplasm. In terms of biological role, specifically dimethylates two adjacent adenosines in the loop of a conserved hairpin near the 3'-end of 16S rRNA in the 30S particle. May play a critical role in biogenesis of 30S subunits. The polypeptide is Probable ribosomal RNA small subunit methyltransferase A (Methanosarcina barkeri (strain Fusaro / DSM 804)).